The following is a 381-amino-acid chain: Neutral protease 2 homolog mep20 (381 aa).

The first 19 residues, methionine 1 to alanine 19, serve as a signal peptide directing secretion. Positions leucine 20–arginine 193 are excised as a propeptide. Disulfide bonds link cysteine 199–cysteine 271 and cysteine 278–cysteine 296. Histidine 321 lines the Zn(2+) pocket. Glutamate 322 is a catalytic residue. Zn(2+) is bound by residues histidine 325 and aspartate 336.

The protein belongs to the peptidase M35 family. Zn(2+) serves as cofactor.

It carries out the reaction Preferential cleavage of bonds with hydrophobic residues in P1'. Also 3-Asn-|-Gln-4 and 8-Gly-|-Ser-9 bonds in insulin B chain.. Secreted metalloproteinase that allows assimilation of proteinaceous substrates. Shows high activities on basic nuclear substrates such as histone and protamine. This chain is Neutral protease 2 homolog mep20 (mep20), found in Aspergillus flavus.